A 1969-amino-acid chain; its full sequence is TP53-binding protein 1 (1969 aa).

Residues 1-24 are disordered; that stretch reads MPGEQMDPTGSQLDSDFSQQDTPC. Positions 8 to 22 are enriched in polar residues; that stretch reads PTGSQLDSDFSQQDT. A phosphoserine mark is found at serine 30, serine 68, and serine 73. A disordered region spans residues 67–168; sequence VSNPEQSAVE…DSLAAEDSAS (102 aa). Positions 69–85 are enriched in polar residues; that stretch reads NPEQSAVEQGDSNSSFN. Residues 86-95 are compositionally biased toward basic and acidic residues; sequence EHLKEKKASD. The segment covering 101-110 has biased composition (polar residues); that stretch reads HLGTSGSISQ. Residue serine 109 is modified to Phosphoserine. A compositionally biased stretch (acidic residues) spans 135-148; that stretch reads PEEEKEEEELEEEK. The segment covering 158–168 has biased composition (low complexity); the sequence is ADSLAAEDSAS. Serine 169, serine 179, and serine 181 each carry phosphoserine. Residue lysine 220 forms a Glycyl lysine isopeptide (Lys-Gly) (interchain with G-Cter in SUMO1); alternate linkage. Residue lysine 220 forms a Glycyl lysine isopeptide (Lys-Gly) (interchain with G-Cter in SUMO2); alternate linkage. 3 disordered regions span residues 254–337, 352–599, and 614–707; these read EQNL…VSTP, LVQE…CKGR, and DSGS…CPEA. 2 positions are modified to phosphoserine: serine 267 and serine 268. Over residues 277-288 the composition is skewed to basic and acidic residues; sequence ETKEQVPARELL. Residues 294 to 324 show a composition bias toward polar residues; sequence VQPSSEPEVSSTQEDLFDQSSKTASDGCSTP. At serine 297 the chain carries Phosphoserine. Threonine 305 carries the post-translational modification Phosphothreonine. Phosphoserine occurs at positions 368, 382, and 397. The segment covering 407 to 419 has biased composition (basic and acidic residues); the sequence is QKLHDDEAMETEK. Residues 426–442 are compositionally biased toward polar residues; sequence PAVSPQASTPVSRSTPV. A phosphoserine mark is found at serine 429, serine 452, and serine 464. Residues 481–490 are compositionally biased toward polar residues; that stretch reads HSSSLTVECS. Residues 491–501 are compositionally biased toward basic and acidic residues; the sequence is KTSESEPKNFT. Serine 507, serine 518, serine 523, and serine 525 each carry phosphoserine. Residues 517-528 are compositionally biased toward polar residues; that stretch reads LSTSEYSQSSKM. A phosphothreonine mark is found at threonine 543 and threonine 548. Phosphoserine is present on residues serine 552 and serine 579. The segment covering 566-582 has biased composition (polar residues); that stretch reads VLVTPSQDDQVEMSQNV. Basic and acidic residues predominate over residues 583–599; that stretch reads DKAKEDETEDRGDCKGR. The segment covering 614-634 has biased composition (polar residues); sequence DSGSQAVPSPATRSEALSSVL. Phosphoserine is present on residues serine 622, serine 627, serine 631, and serine 632. The segment covering 640-649 has biased composition (basic and acidic residues); it reads MDTKEHHPEE. Threonine 662 is subject to Phosphothreonine. Basic and acidic residues predominate over residues 666–675; that stretch reads SHREEPKEEP. Residues serine 684, serine 716, serine 719, and serine 763 each carry the phosphoserine modification. A disordered region spans residues 754–870; it reads KEPSPRADVS…DDKQLGPEGA (117 aa). Residues 790–818 show a composition bias toward basic and acidic residues; the sequence is AENRLDTPEEKRIECDGDSKAETTEKDAV. Position 822 is a phosphoserine (serine 822). Residues 830–839 are compositionally biased toward basic and acidic residues; sequence VRDEPVRPDQ. At threonine 912 the chain carries Phosphothreonine. Lysine 920 is covalently cross-linked (Glycyl lysine isopeptide (Lys-Gly) (interchain with G-Cter in SUMO2)). The interval 927 to 1017 is disordered; that stretch reads STPIGISNYP…GSTAIAEPVA (91 aa). The segment covering 935 to 949 has biased composition (polar residues); sequence YPESTIATSDVTSES. Basic and acidic residues predominate over residues 961–975; it reads EKGDSESAPEMDGKL. At serine 965 the chain carries Phosphoserine. A Glycyl lysine isopeptide (Lys-Gly) (interchain with G-Cter in SUMO2) cross-link involves residue lysine 974. Serine 1018 carries the post-translational modification Phosphoserine. 3 disordered regions span residues 1034–1144, 1178–1231, and 1267–1478; these read QEKE…MDRP, GTST…PHGH, and TEET…DSSS. Positions 1060 to 1074 are enriched in basic and acidic residues; that stretch reads EEDKERPDVTPKLRQ. Phosphoserine occurs at positions 1075 and 1096. The segment covering 1099–1112 has biased composition (low complexity); it reads SQQRASQEQRASQE. Serine 1115 bears the Phosphoserine mark. Over residues 1178-1197 the composition is skewed to polar residues; it reads GTSTAEQNSGKQDATVQTER. Threonine 1211 carries the post-translational modification Phosphothreonine. 2 positions are modified to phosphoserine: serine 1213 and serine 1216. The segment covering 1269–1282 has biased composition (acidic residues); sequence ETEEPIVECQECET. The span at 1295 to 1326 shows a compositional bias: low complexity; sequence DLGDISSFSSKASSSHHTSSGTSLSAIHSSGS. Residue serine 1314 is modified to Phosphoserine. Position 1329 is an omega-N-methylarginine (arginine 1329). A Phosphoserine modification is found at serine 1339. Arginine 1352 carries the omega-N-methylarginine modification. Serine 1359 bears the Phosphoserine mark. Residue lysine 1362 forms a Glycyl lysine isopeptide (Lys-Gly) (interchain with G-Cter in SUMO2) linkage. At serine 1365 the chain carries Phosphoserine. The short motif at 1393–1400 is the GAR element; sequence RGRGRRGR. 2 positions are modified to phosphoserine: serine 1423 and serine 1427. Lysine 1431 participates in a covalent cross-link: Glycyl lysine isopeptide (Lys-Gly) (interchain with G-Cter in SUMO1); alternate. A Glycyl lysine isopeptide (Lys-Gly) (interchain with G-Cter in SUMO2); alternate cross-link involves residue lysine 1431. Phosphoserine occurs at positions 1457, 1459, 1470, and 1471. The span at 1469–1478 shows a compositional bias: low complexity; the sequence is GSSDGLDSSS. A tudor-like region spans residues 1481–1600; that stretch reads NSFVGLRVVA…NRLREQYGLG (120 aa). The segment at 1492 to 1520 is interaction with dimethylated histone H4; the sequence is WSSNGYFYSGKITRDVGAGKYKLLFDDGY. A Glycyl lysine isopeptide (Lys-Gly) (interchain with G-Cter in SUMO1); alternate cross-link involves residue lysine 1560. Lysine 1560 participates in a covalent cross-link: Glycyl lysine isopeptide (Lys-Gly) (interchain with G-Cter in SUMO2); alternate. The short motif at 1601–1628 is the UDR element; that stretch reads PYEAVTPLTKAADISLDNLVEGKRKRRS. Threonine 1606 is modified (phosphothreonine). Residues serine 1615, serine 1628, and serine 1632 each carry the phosphoserine modification. The segment at 1624-1715 is disordered; the sequence is RKRRSNISSP…IGEPSVLEEP (92 aa). Over residues 1631–1648 the composition is skewed to low complexity; the sequence is SSPVTPTAASSSSTTPTR. 2 positions are modified to phosphothreonine: threonine 1635 and threonine 1645. Phosphoserine occurs at positions 1653, 1670, and 1675. Lysine 1682 is covalently cross-linked (Glycyl lysine isopeptide (Lys-Gly) (interchain with G-Cter in ubiquitin)). A phosphoserine mark is found at serine 1698 and serine 1756. 2 consecutive BRCT domains span residues 1749–1845 and 1861–1961; these read LDGP…NYLL and PREN…QHPK.

In terms of assembly, homoligomer. Interacts with p53/TP53 (via the central domain). Interacts with DCLRE1C. Interacts with histone H2AX and this requires phosphorylation of H2AX on 'Ser-139'. Interacts with histone H4 that has been dimethylated at 'Lys-20' (H4K20me2). Has low affinity for histone H4 containing monomethylated 'Lys-20' (H4K20me1). Does not bind histone H4 containing unmethylated or trimethylated 'Lys-20' (H4K20me3). Has low affinity for histone H3 that has been dimethylated on 'Lys-79'. Has very low affinity for histone H3 that has been monomethylated on 'Lys-79' (in vitro). Does not bind unmethylated histone H3. Interacts with histone H2A monoubiquitinated at 'Lys-15' (H2AK15Ub). Interacts with PWWP3A/EXPAND1. Interacts with CHEK2; modulates CHEK2 phosphorylation at 'Thr-68' in response to infrared. Interacts with MSL1; this interaction may be required for MSL1 DNA repair activity, but not for histone acetyltransferase activity. Interacts (when phosphorylated by ATM) with RIF1. Interacts (via the Tudor-like domain) with NUDT16L1/TIRR; interaction masks the Tudor-like domain and prevents recruitment to chromatin. Interacts with PAXIP1. Interacts with IFI202A. Interacts with SHLD2. Interacts (when phosphorylated) with TOPBP1. Interacts with GFI1; promoting methylation by PRMT1. Interacts with (phosphorylated) DYNLL1; specifically binds DYNLL1 phosphorylated at 'Ser-88' and promotes its recruitment to double stand breaks (DSBs). Post-translationally, phosphorylated at basal level in the absence of DNA damage. Phosphorylated by ATM in response to DNA damage: phosphorylation at different sites promotes interaction with different set of proteins: phosphorylation at the N-terminus by ATM (residues from 11-181) promotes interaction with PAXIP1 and non-homologous end joining (NHEJ) of dysfunctional telomeres. Phosphorylation by ATM at residues that are located more C-terminus (residues 300-650) leads to promote interaction with RIF1. Interaction with RIF1 leads to disrupt interaction with NUDT16L1/TIRR. Phosphorylation at Thr-1606 and Ser-1615 in the UDR motif blocks interaction with H2AK15ub. Dephosphorylated by PPP4C. Hyperphosphorylation during mitosis correlates with its exclusion from chromatin and DNA lesions. Hyperphosphorylated in an ATR-dependent manner in response to DNA damage induced by UV irradiation. Dephosphorylated by PPP5C. Phosphorylation at Ser-368 and Thr-662 promotes interaction with TOPBP1. Phosphorylated by VRK1. Asymmetrically dimethylated on Arg residues by PRMT1. Methylation is required for DNA binding. In terms of processing, monoubiquitinated at Lys-1682 by MSL2 is reponse to DNA damage, leading to its stabilization.

Its subcellular location is the nucleus. It is found in the chromosome. The protein resides in the centromere. The protein localises to the kinetochore. Its function is as follows. Double-strand break (DSB) repair protein involved in response to DNA damage, telomere dynamics and class-switch recombination (CSR) during antibody genesis. Plays a key role in the repair of double-strand DNA breaks (DSBs) in response to DNA damage by promoting non-homologous end joining (NHEJ)-mediated repair of DSBs and specifically counteracting the function of the homologous recombination (HR) repair protein BRCA1. In response to DSBs, phosphorylation by ATM promotes interaction with RIF1 and dissociation from NUDT16L1/TIRR, leading to recruitment to DSBs sites. Recruited to DSBs sites by recognizing and binding histone H2A monoubiquitinated at 'Lys-15' (H2AK15Ub) and histone H4 dimethylated at 'Lys-20' (H4K20me2), two histone marks that are present at DSBs sites. Required for immunoglobulin class-switch recombination (CSR) during antibody genesis, a process that involves the generation of DNA DSBs. Participates in the repair and the orientation of the broken DNA ends during CSR. In contrast, it is not required for classic NHEJ and V(D)J recombination. Promotes NHEJ of dysfunctional telomeres. This is TP53-binding protein 1 from Mus musculus (Mouse).